The sequence spans 143 residues: Putative complexin-1 (143 aa).

The interval 15–71 (NEVTGGLGLKDDGGEKTETGEDPEVVAARLEQEERRKEKHRKMEQEREKMRQGIRDK) is disordered. Basic and acidic residues-rich tracts occupy residues 23-33 (LKDDGGEKTET) and 44-71 (LEQEERRKEKHRKMEQEREKMRQGIRDK). Positions 40–71 (VAARLEQEERRKEKHRKMEQEREKMRQGIRDK) form a coiled coil.

The protein belongs to the complexin/synaphin family.

The protein localises to the cytoplasm. Its subcellular location is the cytosol. Its function is as follows. Positively regulates a late step in synaptic vesicle exocytosis. In Caenorhabditis briggsae, this protein is Putative complexin-1 (cpx-1).